A 158-amino-acid chain; its full sequence is Non-secretory ribonuclease (158 aa).

Residues 1-27 (MVPKLFTSQICLLPLLGLLSAEGSPHA) form the signal peptide. The active-site Proton acceptor is the H42. Y60 is modified (3'-nitrotyrosine). 65 to 69 (KNKNT) serves as a coordination point for substrate. Residues N86, N92, and N111 are each glycosylated (N-linked (GlcNAc...) asparagine). H153 acts as the Proton donor in catalysis.

It belongs to the pancreatic ribonuclease family. Interacts with and forms a tight 1:1 complex with RNH1. Dimerization of two such complexes may occur.

The protein localises to the lysosome. The protein resides in the cytoplasmic granule. The enzyme catalyses an [RNA] containing cytidine + H2O = an [RNA]-3'-cytidine-3'-phosphate + a 5'-hydroxy-ribonucleotide-3'-[RNA].. It catalyses the reaction an [RNA] containing uridine + H2O = an [RNA]-3'-uridine-3'-phosphate + a 5'-hydroxy-ribonucleotide-3'-[RNA].. This is a non-secretory ribonuclease. It is a pyrimidine specific nuclease with a slight preference for U. Cytotoxin and helminthotoxin. Possesses a wide variety of biological activities. This chain is Non-secretory ribonuclease (RNASE2), found in Callithrix jacchus (White-tufted-ear marmoset).